Consider the following 299-residue polypeptide: Recombination-associated protein RdgC (299 aa).

Belongs to the RdgC family.

It is found in the cytoplasm. Its subcellular location is the nucleoid. May be involved in recombination. The protein is Recombination-associated protein RdgC of Laribacter hongkongensis (strain HLHK9).